The primary structure comprises 429 residues: Ribosomal RNA small subunit methyltransferase B (429 aa).

Residues 254–260, Asp-277, Asp-303, and Asp-322 contribute to the S-adenosyl-L-methionine site; that span reads CAAPGGK. Residue Cys-375 is the Nucleophile of the active site.

It belongs to the class I-like SAM-binding methyltransferase superfamily. RsmB/NOP family.

The protein localises to the cytoplasm. The enzyme catalyses cytidine(967) in 16S rRNA + S-adenosyl-L-methionine = 5-methylcytidine(967) in 16S rRNA + S-adenosyl-L-homocysteine + H(+). Specifically methylates the cytosine at position 967 (m5C967) of 16S rRNA. The protein is Ribosomal RNA small subunit methyltransferase B of Pectobacterium atrosepticum (strain SCRI 1043 / ATCC BAA-672) (Erwinia carotovora subsp. atroseptica).